Here is a 286-residue protein sequence, read N- to C-terminus: Energy-coupling factor transporter ATP-binding protein EcfA2 (286 aa).

The ABC transporter domain occupies 3 to 246 (IQFNQVSYIY…KTQLLKWHIE (244 aa)). 40-47 (GQTGSGKS) lines the ATP pocket.

The protein belongs to the ABC transporter superfamily. Energy-coupling factor EcfA family. As to quaternary structure, forms a stable energy-coupling factor (ECF) transporter complex composed of 2 membrane-embedded substrate-binding proteins (S component), 2 ATP-binding proteins (A component) and 2 transmembrane proteins (T component).

The protein localises to the cell membrane. Its function is as follows. ATP-binding (A) component of a common energy-coupling factor (ECF) ABC-transporter complex. Unlike classic ABC transporters this ECF transporter provides the energy necessary to transport a number of different substrates. The protein is Energy-coupling factor transporter ATP-binding protein EcfA2 of Staphylococcus epidermidis (strain ATCC 12228 / FDA PCI 1200).